Consider the following 249-residue polypeptide: tRNA pseudouridine synthase A (249 aa).

Catalysis depends on Asp-53, which acts as the Nucleophile. Tyr-111 contributes to the substrate binding site.

Belongs to the tRNA pseudouridine synthase TruA family. In terms of assembly, homodimer.

It carries out the reaction uridine(38/39/40) in tRNA = pseudouridine(38/39/40) in tRNA. Its function is as follows. Formation of pseudouridine at positions 38, 39 and 40 in the anticodon stem and loop of transfer RNAs. The protein is tRNA pseudouridine synthase A of Streptococcus suis (strain 05ZYH33).